A 437-amino-acid polypeptide reads, in one-letter code: UDP-N-acetylmuramate--L-alanine ligase (437 aa).

Gly-108–Ser-114 is a binding site for ATP.

It belongs to the MurCDEF family.

The protein resides in the cytoplasm. It carries out the reaction UDP-N-acetyl-alpha-D-muramate + L-alanine + ATP = UDP-N-acetyl-alpha-D-muramoyl-L-alanine + ADP + phosphate + H(+). The protein operates within cell wall biogenesis; peptidoglycan biosynthesis. Cell wall formation. In Staphylococcus aureus (strain COL), this protein is UDP-N-acetylmuramate--L-alanine ligase.